We begin with the raw amino-acid sequence, 350 residues long: S-adenosylmethionine:tRNA ribosyltransferase-isomerase (350 aa).

The protein belongs to the QueA family. Monomer.

The protein resides in the cytoplasm. It catalyses the reaction 7-aminomethyl-7-carbaguanosine(34) in tRNA + S-adenosyl-L-methionine = epoxyqueuosine(34) in tRNA + adenine + L-methionine + 2 H(+). It participates in tRNA modification; tRNA-queuosine biosynthesis. Transfers and isomerizes the ribose moiety from AdoMet to the 7-aminomethyl group of 7-deazaguanine (preQ1-tRNA) to give epoxyqueuosine (oQ-tRNA). This chain is S-adenosylmethionine:tRNA ribosyltransferase-isomerase, found in Saccharophagus degradans (strain 2-40 / ATCC 43961 / DSM 17024).